Consider the following 271-residue polypeptide: MTLADRVPLALAALAYLALVSGVRFHLSEQNDVLPGGSQARRPFFQGARIVGGSVASEGQFPHQVALLRGNALTCGGSLIESRWVLTAAHCVYNGALVVPASSIVVVAGSVSLSNGVRRAVARVIPHERYGNFKNDVALLQLQLSLPSSAYIRPIALRTTSVPAGSEVVISGWGRMYQGGPVSNMLRYNRATVVADQQCRMATGISTGLICFTSPVNNGACNGDSGGPAILNNQLVGVANFIINYCGSASPDGYARVSDFVTWIQTTMRRY.

The first 22 residues, 1-22, serve as a signal peptide directing secretion; the sequence is MTLADRVPLALAALAYLALVSG. The propeptide at 23–49 is activation peptide; the sequence is VRFHLSEQNDVLPGGSQARRPFFQGAR. Residues 50-269 form the Peptidase S1 domain; it reads IVGGSVASEG…FVTWIQTTMR (220 aa). Cysteines 75 and 91 form a disulfide. Active-site charge relay system residues include His90 and Asp136. Intrachain disulfides connect Cys199-Cys211 and Cys221-Cys246. Ser225 serves as the catalytic Charge relay system.

This sequence belongs to the peptidase S1 family. As to expression, highest level of adult expression is in the thorax.

The sequence is that of Serine protease SP24D (Sp24D) from Anopheles gambiae (African malaria mosquito).